Here is a 717-residue protein sequence, read N- to C-terminus: Aryl hydrocarbon receptor nuclear translocator 2 (717 aa).

2 disordered regions span residues 1-20 (MATP…PGSV) and 35-74 (MAGA…IERR). Arginine 42 bears the Omega-N-methylarginine mark. Over residues 63–73 (FSRENHSEIER) the composition is skewed to basic and acidic residues. Positions 63-116 (FSRENHSEIERRRRNKMTQYITELSDMVPTCSALARKPDKLTILRMAVSHMKSM) constitute a bHLH domain. PAS domains are found at residues 134-209 (TEQE…MTGR) and 323-393 (PVCM…VKLK). Residues 398–441 (SVMYRFRTKNREWMLIRTSSFTFQNPYSDEIEYIICTNTNVKQL) form the PAC domain. The disordered stretch occupies residues 548–717 (NDIQSSSSTG…DLGMFPPFSE (170 aa)). 2 stretches are compositionally biased toward polar residues: residues 549-574 (DIQS…QVAW) and 585-605 (QIPS…TSHT). Residues 610–625 (PSSYSPLSSPATSSPS) are compositionally biased toward low complexity. Positions 642–651 (SGQSSGQFQG) are enriched in polar residues. Positions 658 to 680 (SQWQSQHHGQQSGEQHSHQQPGQ) are enriched in low complexity.

In terms of assembly, efficient DNA binding requires dimerization with another bHLH protein. Heterodimer with NPAS4. Heterodimer with SIM1. Heterodimer with the aryl hydrocarbon receptor (AHR) or the SIM1 protein. Interacts with TACC3.

It is found in the nucleus. Functionally, transcription factor that plays a role in the development of the hypothalamo-pituitary axis, postnatal brain growth, and visual and renal function. Specifically recognizes the xenobiotic response element (XRE). This Homo sapiens (Human) protein is Aryl hydrocarbon receptor nuclear translocator 2 (ARNT2).